A 353-amino-acid polypeptide reads, in one-letter code: MNILFDSNETIYPFPPKPRPLSVDAKQHYRSRIKTLLRERNAVMVAHYYTDPEIQALAEETGGCVADSLEMARFGSTHSASTLLVAGVRFMGETAKILNPEKTILMPTLEAECSLDLGCPIDAFSRFCDAHPDRTVVVYANTSAAVKARADWVVTSSIAVELIEHLDSLGEKIIWAPDRHLGSYVQKQTGADVLCWQGACIVHDEFKTQALQRMKILYPDAAILVHPESPQSVVEMADAVGSTSQLIQAAKTLPQRELIVATDRGIFYKMQQACPEKTLLEAPTAGEGATCRSCAHCPWMAMNGLEAIANGLEQGGHAHEIHVDAALREGALIPLNRMLDFAASLKLRVKGNA.

His47 and Ser68 together coordinate iminosuccinate. Cys113 contacts [4Fe-4S] cluster. Iminosuccinate contacts are provided by residues 139–141 and Ser156; that span reads YAN. [4Fe-4S] cluster is bound at residue Cys200. Iminosuccinate contacts are provided by residues 226 to 228 and Thr243; that span reads HPE. [4Fe-4S] cluster is bound at residue Cys297.

It belongs to the quinolinate synthase family. Type 1 subfamily. [4Fe-4S] cluster serves as cofactor.

It is found in the cytoplasm. It carries out the reaction iminosuccinate + dihydroxyacetone phosphate = quinolinate + phosphate + 2 H2O + H(+). The protein operates within cofactor biosynthesis; NAD(+) biosynthesis; quinolinate from iminoaspartate: step 1/1. Catalyzes the condensation of iminoaspartate with dihydroxyacetone phosphate to form quinolinate. The polypeptide is Quinolinate synthase (Pectobacterium atrosepticum (strain SCRI 1043 / ATCC BAA-672) (Erwinia carotovora subsp. atroseptica)).